A 440-amino-acid chain; its full sequence is Serine/threonine-protein kinase toxin HipA (440 aa).

At Ser-150 the chain carries Phosphoserine; by autocatalysis. ATP is bound by residues 152 to 157, Lys-181, and 234 to 236; these read AGAQEK and ERF. The active-site Proton acceptor is Asp-309. ATP contacts are provided by residues 311–314 and 331–332; these read HAKN and YD. Residues 379 to 382 mediate DNA binding; that stretch reads KVLR.

The protein belongs to the HipA Ser/Thr kinase family. In terms of assembly, forms a HipA(2)HipB(2) heterotetramer which can interact with a single operator on DNA. When 2 operators are present each HipB dimer contacts 1 HipA molecule, which are brought together by the DNA bend and dimerize, blocking the HipA active site and inactivating its toxic activity. Mutations present in allele hipA7 (G22S and D291A) decrease the affinity of HipA for HipB. Post-translationally, autophosphorylates intermolecularly on Ser-150; phosphorylated form not seen to bind ATP and no longer has kinase activity.

The enzyme catalyses L-seryl-[protein] + ATP = O-phospho-L-seryl-[protein] + ADP + H(+). It catalyses the reaction L-threonyl-[protein] + ATP = O-phospho-L-threonyl-[protein] + ADP + H(+). Once phosphorylated no longer has kinase activity. Functionally, toxic component of a type II toxin-antitoxin (TA) system, first identified by mutations that increase production of persister cells, a fraction of cells that are phenotypic variants not killed by antibiotics, which lead to multidrug tolerance. Persistence may be ultimately due to global remodeling of the persister cell's ribosomes. Phosphorylates Glu-tRNA-ligase (AC P04805, gltX, on 'Ser-239') in vivo. Phosphorylation of GltX prevents it from being charged, leading to an increase in uncharged tRNA(Glu). This induces amino acid starvation and the stringent response via RelA/SpoT and increased (p)ppGpp levels, which inhibits replication, transcription, translation and cell wall synthesis, reducing growth and leading to persistence and multidrug resistance. Once the level of HipA exceeds a threshold cells become dormant, and the length of dormancy is determined by how much HipA levels exceed the threshold. The hipA7 mutation (a double G22S D291A mutation) leads to increased generation of persister cells (cells that survive antibiotic treatment) probably by entering into a dormant state, as well as cold-sensitivity. Wild-type cells produce persisters at a frequency of 10(-6) to 10(-5) whereas hipA7 cells produce about 100-fold more persisters. hipA7 decreases the affinity for antitoxin HipB, leading to increased HipA levels and persistence; depending on the protein level, can be toxic enough to reduce cell growth or even kill cells. Generation of persister cells requires (p)ppGpp as cells lacking relA or relA/spoT generate fewer or no persister cells respectively compared to hipA7. The toxic effect of HipA is neutralized by its cognate antitoxin HipB. Also neutralized by overexpression of gltX. With HipB acts as a corepressor for transcription of the hipBA promoter; binding of HipA-HipB to DNA induces a 70 degree bend. This brings together and dimerizes 2 HipA molecules, which distorts the promoter region, preventing sigma-factor binding; additionally HipA and HipB would physically prevent RNA core polymerase from contacting the -35 promoter box. May play a role in biofilm formation. This chain is Serine/threonine-protein kinase toxin HipA (hipA), found in Escherichia coli (strain K12).